Here is a 120-residue protein sequence, read N- to C-terminus: uncharacterized protein (120 aa).

A helical transmembrane segment spans residues 93–109 (LCVGISTTMIIQVLFLL).

The protein resides in the membrane. This is an uncharacterized protein from Saccharomyces cerevisiae (strain ATCC 204508 / S288c) (Baker's yeast).